The sequence spans 124 residues: Fluoride-specific ion channel FluC (124 aa).

4 helical membrane passes run 5–25, 32–52, 67–87, and 96–116; these read VYIA…SGFV, SFPY…GLIM, FAIT…SFET, and LLIA…CTWI. Positions 75 and 78 each coordinate Na(+).

The protein belongs to the fluoride channel Fluc/FEX (TC 1.A.43) family.

The protein resides in the cell inner membrane. It catalyses the reaction fluoride(in) = fluoride(out). Its activity is regulated as follows. Na(+) is not transported, but it plays an essential structural role and its presence is essential for fluoride channel function. Fluoride-specific ion channel. Important for reducing fluoride concentration in the cell, thus reducing its toxicity. This chain is Fluoride-specific ion channel FluC, found in Citrifermentans bemidjiense (strain ATCC BAA-1014 / DSM 16622 / JCM 12645 / Bem) (Geobacter bemidjiensis).